A 579-amino-acid chain; its full sequence is Pentatricopeptide repeat-containing protein At2g15690, mitochondrial (579 aa).

The N-terminal 49 residues, Met-1–Leu-49, are a transit peptide targeting the mitochondrion. Composition is skewed to polar residues over residues Asn-56 to Gln-71 and Ser-78 to Gly-103. The segment at Asn-56 to Ser-208 is disordered. 2 stretches are compositionally biased toward low complexity: residues Gly-117–Gln-136 and Arg-148–Gln-199. PPR repeat units follow at residues Asp-235 to Gly-269, Asp-270 to Lys-300, Asp-301 to Pro-335, Asn-336 to Pro-371, and Lys-372 to Glu-402. The tract at residues Gly-485–Trp-579 is type DYW motif.

It belongs to the PPR family. PCMP-H subfamily.

The protein resides in the mitochondrion. The protein is Pentatricopeptide repeat-containing protein At2g15690, mitochondrial (PCMP-H66) of Arabidopsis thaliana (Mouse-ear cress).